The primary structure comprises 2310 residues: Peroxide stress-activated histidine kinase mak2 (2310 aa).

The region spanning 12 to 292 is the Protein kinase domain; it reads DYAISQLGEF…SATDLCYTIV (281 aa). Residues 1450-1592 form the GAF domain; sequence RLGPLLTTVI…LLSQQIAISV (143 aa). A Histidine kinase domain is found at 1760-1986; that stretch reads NMSHELRTPF…TFWFHVQLRN (227 aa). His1763 bears the Phosphohistidine; by autocatalysis mark. Residues 2180–2303 form the Response regulatory domain; the sequence is YALIAEDNLI…QLVNAVREFV (124 aa). The residue at position 2232 (Asp2232) is a 4-aspartylphosphate.

It is found in the cytoplasm. The catalysed reaction is ATP + protein L-histidine = ADP + protein N-phospho-L-histidine.. Involved in the control of the SAPK-dependent transcriptional response to peroxide stress. Regulates sty1 activity. This is Peroxide stress-activated histidine kinase mak2 (mak2) from Schizosaccharomyces pombe (strain 972 / ATCC 24843) (Fission yeast).